The chain runs to 181 residues: Large ribosomal subunit protein uL5 (181 aa).

Belongs to the universal ribosomal protein uL5 family. In terms of assembly, part of the 50S ribosomal subunit; contacts the 5S rRNA and probably tRNA. Forms a bridge to the 30S subunit in the 70S ribosome.

This is one of the proteins that bind and probably mediate the attachment of the 5S RNA into the large ribosomal subunit, where it forms part of the central protuberance. In the 70S ribosome it contacts protein S13 of the 30S subunit (bridge B1b), connecting the 2 subunits; this bridge is implicated in subunit movement. May contact the P site tRNA; the 5S rRNA and some of its associated proteins might help stabilize positioning of ribosome-bound tRNAs. In Methanococcus vannielii, this protein is Large ribosomal subunit protein uL5.